The chain runs to 352 residues: MDDNKQKALAAALGQIEKQFGKGSIMRLGDNKTMDIETVSTGSLALDIALGAGGLPMGRIVEIYGPESSGKTTLTLEVIASAQKAGKTCAFIDAEHALDPIYAQKLGVDIDQLLCSQPDTGEQALEIVDALARSGAVDLIVVDSVAALTPKAEIEGEMGDSHMGLQARMLSQAMRKLTGNLKNANCMCIFINQIRMKIGVMFGNPETTTGGNALKFYASVRLDIRRTGAIKDGDEVVGNETRIKVVKNKIAAPFKQAETQILYGQGFNRNGELIDLGVKHKLVEKAGAWYSYKGNKIGQGKANSCKHLVENPAIAEEIEKLLRDMLLSPVGEEVEKADVKKDAKKDAAEALK.

Position 65 to 72 (65 to 72 (GPESSGKT)) interacts with ATP. The segment at 332 to 352 (EEVEKADVKKDAKKDAAEALK) is disordered. Residues 333-352 (EVEKADVKKDAKKDAAEALK) are compositionally biased toward basic and acidic residues.

Belongs to the RecA family.

The protein resides in the cytoplasm. Can catalyze the hydrolysis of ATP in the presence of single-stranded DNA, the ATP-dependent uptake of single-stranded DNA by duplex DNA, and the ATP-dependent hybridization of homologous single-stranded DNAs. It interacts with LexA causing its activation and leading to its autocatalytic cleavage. The polypeptide is Protein RecA (Photobacterium profundum (strain SS9)).